Here is a 155-residue protein sequence, read N- to C-terminus: Cyclic pyranopterin monophosphate synthase (155 aa).

Substrate-binding positions include 75 to 77 and 111 to 112; these read LCH and ME. Residue D126 is part of the active site.

The protein belongs to the MoaC family. As to quaternary structure, homohexamer; trimer of dimers.

It carries out the reaction (8S)-3',8-cyclo-7,8-dihydroguanosine 5'-triphosphate = cyclic pyranopterin phosphate + diphosphate. Its pathway is cofactor biosynthesis; molybdopterin biosynthesis. Functionally, catalyzes the conversion of (8S)-3',8-cyclo-7,8-dihydroguanosine 5'-triphosphate to cyclic pyranopterin monophosphate (cPMP). This chain is Cyclic pyranopterin monophosphate synthase, found in Corynebacterium efficiens (strain DSM 44549 / YS-314 / AJ 12310 / JCM 11189 / NBRC 100395).